Reading from the N-terminus, the 340-residue chain is Tetraacyldisaccharide 4'-kinase (340 aa).

An ATP-binding site is contributed by 50 to 57 (HGGGAGKT).

It belongs to the LpxK family.

It catalyses the reaction a lipid A disaccharide + ATP = a lipid IVA + ADP + H(+). It participates in glycolipid biosynthesis; lipid IV(A) biosynthesis; lipid IV(A) from (3R)-3-hydroxytetradecanoyl-[acyl-carrier-protein] and UDP-N-acetyl-alpha-D-glucosamine: step 6/6. In terms of biological role, transfers the gamma-phosphate of ATP to the 4'-position of a tetraacyldisaccharide 1-phosphate intermediate (termed DS-1-P) to form tetraacyldisaccharide 1,4'-bis-phosphate (lipid IVA). The protein is Tetraacyldisaccharide 4'-kinase of Rhodopseudomonas palustris (strain BisA53).